The sequence spans 168 residues: uncharacterized protein (168 aa).

Transmembrane regions (helical) follow at residues 4–24 and 94–114; these read IIAL…PEEE and IMVG…GFAW.

This sequence to A.aeolicus aq_1446.

It localises to the cell membrane. This is an uncharacterized protein from Aquifex aeolicus (strain VF5).